Reading from the N-terminus, the 446-residue chain is Eukaryotic translation initiation factor 2 subunit gamma (446 aa).

One can recognise a tr-type G domain in the interval Gln-21–Val-227. Residues Gly-30–Ser-37 are G1. Ala-33–Thr-38 is a binding site for GTP. Positions Asn-58–Lys-62 are G2. The segment at Asp-114–Gly-117 is G3. GTP is bound by residues Asn-170–Asp-173 and Ser-205–Gln-207. Residues Asn-170 to Asp-173 are G4. Residues Ser-205 to Gln-207 are G5. Residues Ala-436–Val-446 form an interacts with cdc123 region.

The protein belongs to the TRAFAC class translation factor GTPase superfamily. Classic translation factor GTPase family. EIF2G subfamily. Eukaryotic translation initiation factor 2 eIF2 is a heterotrimeric complex composed of an alpha, a beta and a gamma subunit. The factors eIF-1, eIF-2, eIF-3, TIF5/eIF-5 and methionyl-tRNAi form a multifactor complex (MFC) that may bind to the 40S ribosome. Interacts with cdc123; the interaction is direct.

It localises to the cytoplasm. The protein localises to the cytosol. The catalysed reaction is GTP + H2O = GDP + phosphate + H(+). Its function is as follows. As a subunit of eukaryotic initiation factor 2 eIF2, involved in the early steps of protein synthesis. In the presence of GTP, eIF-2 forms a ternary complex with initiator tRNA Met-tRNAi and then recruits the 40S ribosomal complex and initiation factors eIF-1, eIF-1A and eIF-3 to form the 43S pre-initiation complex (43S PIC), a step that determines the rate of protein translation. The 43S PIC binds to mRNA and scans downstream to the initiation codon, where it forms a 48S initiation complex by codon-anticodon base pairing. This leads to the displacement of eIF-1 to allow GTPase-activating protein (GAP) eIF-5-mediated hydrolysis of eIF2-bound GTP. Hydrolysis of GTP and release of Pi, which makes GTP hydrolysis irreversible, causes the release of the eIF-2-GDP binary complex from the 40S subunit, an event that is essential for the subsequent joining of the 60S ribosomal subunit to form an elongation-competent 80S ribosome. In order for eIF-2 to recycle and catalyze another round of initiation, the GDP bound to eIF-2 must be exchanged with GTP by way of a reaction catalyzed by GDP-GTP exchange factor (GEF) eIF-2B. This chain is Eukaryotic translation initiation factor 2 subunit gamma (tif213), found in Schizosaccharomyces pombe (strain 972 / ATCC 24843) (Fission yeast).